A 559-amino-acid chain; its full sequence is Spermidine/putrescine import ATP-binding protein PotA (559 aa).

One can recognise an ABC transporter domain in the interval 7 to 448 (IEIEGLNKTF…PKTEWIANFI (442 aa)). Residue 40–47 (GPSGCGKT) coordinates ATP. Residues 108–317 (WTKLDEIPKL…EAFEKRYLSR (210 aa)) form an insert region.

The protein belongs to the ABC transporter superfamily. Spermidine/putrescine importer (TC 3.A.1.11.1) family. In terms of assembly, the complex is composed of two ATP-binding proteins (PotA), two transmembrane proteins (PotB and PotC) and a solute-binding protein (PotD).

Its subcellular location is the cell membrane. It carries out the reaction ATP + H2O + polyamine-[polyamine-binding protein]Side 1 = ADP + phosphate + polyamineSide 2 + [polyamine-binding protein]Side 1.. In terms of biological role, part of the ABC transporter complex PotABCD involved in spermidine/putrescine import. Responsible for energy coupling to the transport system. In Mycoplasma genitalium (strain ATCC 33530 / DSM 19775 / NCTC 10195 / G37) (Mycoplasmoides genitalium), this protein is Spermidine/putrescine import ATP-binding protein PotA.